Consider the following 141-residue polypeptide: HTH-type transcriptional repressor NsrR (141 aa).

In terms of domain architecture, HTH rrf2-type spans Gln2 to Glu129. A DNA-binding region (H-T-H motif) is located at residues Ile28–Arg51. 3 residues coordinate [2Fe-2S] cluster: Cys91, Cys96, and Cys102.

The cofactor is [2Fe-2S] cluster.

Nitric oxide-sensitive repressor of genes involved in protecting the cell against nitrosative stress. May require iron for activity. This Enterobacter sp. (strain 638) protein is HTH-type transcriptional repressor NsrR.